The chain runs to 256 residues: Reaction center protein M chain (256 aa).

3 helical membrane passes run 52–78 (PGVA…LASV), 110–139 (EGGW…ARAL), and 142–167 (GTHM…PLLL). Residues histidine 181 and histidine 201 each contribute to the (7R,8Z)-bacteriochlorophyll b site. Residues 197–225 (YNPFHMLSIAFLYGSAVLFAMHGATILAV) form a helical membrane-spanning segment. Positions 218 and 233 each coordinate Fe cation. A ubiquinone is bound at residue tryptophan 251.

Belongs to the reaction center PufL/M/PsbA/D family. Reaction center is composed of four bacteriochlorophylls, two bacteriopheophytins, two ubiquinones, one iron, and two highly hydrophobic polypeptide chains (designated L and M).

It localises to the cellular chromatophore membrane. In terms of biological role, the reaction center is a membrane-bound complex that mediates the initial photochemical event in the electron transfer process of photosynthesis. The polypeptide is Reaction center protein M chain (pufM) (Pararhodospirillum photometricum (Rhodospirillum photometricum)).